The following is a 366-amino-acid chain: tRNA/tmRNA (uracil-C(5))-methyltransferase (366 aa).

5 residues coordinate S-adenosyl-L-methionine: glutamine 190, tyrosine 218, asparagine 223, glutamate 239, and aspartate 299. Cysteine 324 (nucleophile) is an active-site residue. Glutamate 358 functions as the Proton acceptor in the catalytic mechanism.

Belongs to the class I-like SAM-binding methyltransferase superfamily. RNA M5U methyltransferase family. TrmA subfamily.

It catalyses the reaction uridine(54) in tRNA + S-adenosyl-L-methionine = 5-methyluridine(54) in tRNA + S-adenosyl-L-homocysteine + H(+). The enzyme catalyses uridine(341) in tmRNA + S-adenosyl-L-methionine = 5-methyluridine(341) in tmRNA + S-adenosyl-L-homocysteine + H(+). Dual-specificity methyltransferase that catalyzes the formation of 5-methyluridine at position 54 (m5U54) in all tRNAs, and that of position 341 (m5U341) in tmRNA (transfer-mRNA). The protein is tRNA/tmRNA (uracil-C(5))-methyltransferase of Shigella flexneri serotype 5b (strain 8401).